Reading from the N-terminus, the 484-residue chain is Probable cytosol aminopeptidase (484 aa).

The Mn(2+) site is built by Lys256 and Asp261. The active site involves Lys268. Mn(2+) contacts are provided by Asp279, Asp338, and Glu340. The active site involves Arg342.

This sequence belongs to the peptidase M17 family. It depends on Mn(2+) as a cofactor.

It is found in the cytoplasm. It catalyses the reaction Release of an N-terminal amino acid, Xaa-|-Yaa-, in which Xaa is preferably Leu, but may be other amino acids including Pro although not Arg or Lys, and Yaa may be Pro. Amino acid amides and methyl esters are also readily hydrolyzed, but rates on arylamides are exceedingly low.. The enzyme catalyses Release of an N-terminal amino acid, preferentially leucine, but not glutamic or aspartic acids.. Presumably involved in the processing and regular turnover of intracellular proteins. Catalyzes the removal of unsubstituted N-terminal amino acids from various peptides. The polypeptide is Probable cytosol aminopeptidase (Actinobacillus succinogenes (strain ATCC 55618 / DSM 22257 / CCUG 43843 / 130Z)).